The chain runs to 459 residues: Phosphomethylpyrimidine synthase (459 aa).

Substrate is bound by residues Asn80, Met109, Tyr139, His175, 195 to 197 (SRG), 236 to 239 (DSLR), and Glu275. Position 279 (His279) interacts with Zn(2+). Tyr302 is a substrate binding site. Position 343 (His343) interacts with Zn(2+). Residues Cys423, Cys426, and Cys431 each coordinate [4Fe-4S] cluster.

The protein belongs to the ThiC family. [4Fe-4S] cluster serves as cofactor.

It carries out the reaction 5-amino-1-(5-phospho-beta-D-ribosyl)imidazole + S-adenosyl-L-methionine = 4-amino-2-methyl-5-(phosphooxymethyl)pyrimidine + CO + 5'-deoxyadenosine + formate + L-methionine + 3 H(+). The protein operates within cofactor biosynthesis; thiamine diphosphate biosynthesis. Functionally, catalyzes the synthesis of the hydroxymethylpyrimidine phosphate (HMP-P) moiety of thiamine from aminoimidazole ribotide (AIR) in a radical S-adenosyl-L-methionine (SAM)-dependent reaction. This Gloeothece citriformis (strain PCC 7424) (Cyanothece sp. (strain PCC 7424)) protein is Phosphomethylpyrimidine synthase.